Reading from the N-terminus, the 458-residue chain is MSCKTPPTLQELAENSLLKNQDLAISALDDIPSLFFPSLFKKACRNRYVGIIKAMVQAWPFPCLPLGAMISRKTAYRRILEIILYGLDALLSQKVPHSRCKLQVLDLRVMPLKLWNRLPVFGTAGCSENPAVVGHSGTEVKQPVKVLVDLVLKESPLDSTESFLVQWVDNRNGLVSLCCCKLQIWAMSMYYHRKLLEILDLDSVQELRMYCISNPVCLLNFAPYLGRMRNLRCLILSHLWQTFSMTPVEKQQVITQFTSQFLKLKCLQILHLDTVFFLEGHLDELFWWLKTPLETLSVIDCNLSKSDWFHISEFQCTSQLKHLNLKWVKLTHLSPEPLRVLLLKSASTLTSLDLEGCQMMDSQLSAILPALRCCTQLTKFNFHGNYISMPILRELAYNVVKQKSQQSKIRFIPSCSHHSGLEFEAISQPHIVFVDVDRTTGEQEQVLFYAICSGEYVL.

An LRR 1; degenerate repeat occupies 99–126; that stretch reads RCKLQVLDLRVMPLKLWNRLPVFGTAGC. The stretch at 176–200 is one LRR 2; degenerate repeat; that stretch reads SLCCCKLQIWAMSMYYHRKLLEILD. One copy of the LRR 3; degenerate repeat lies at 201 to 227; the sequence is LDSVQELRMYCISNPVCLLNFAPYLGR. An LRR 4; degenerate repeat occupies 228-263; it reads MRNLRCLILSHLWQTFSMTPVEKQQVITQFTSQFLK. LRR repeat units lie at residues 264-289, 290-321, 322-340, 346-373, and 374-398; these read LKCL…FWWL, KTPL…SQLK, HLNL…PLRV, ASTL…ALRC, and CTQL…LAYN.

This sequence belongs to the PRAME family. In terms of tissue distribution, specifically expressed in testis (at protein level).

It is found in the cytoplasm. The protein resides in the cytoplasmic vesicle. The protein localises to the secretory vesicle. Its subcellular location is the acrosome. It localises to the cell projection. It is found in the cilium. The protein resides in the flagellum. In terms of biological role, may play a role in acrosome development and also in sperm maturation and motility. This is Preferentially expressed antigen in melanoma-like protein 1 from Mus musculus (Mouse).